The primary structure comprises 445 residues: tRNA-2-methylthio-N(6)-dimethylallyladenosine synthase (445 aa).

Residues 2–122 (KKAFVKSYGC…LPDLLARSRE (121 aa)) enclose the MTTase N-terminal domain. The [4Fe-4S] cluster site is built by cysteine 11, cysteine 47, cysteine 85, cysteine 157, cysteine 161, and cysteine 164. In terms of domain architecture, Radical SAM core spans 143 to 378 (RTLGASAFLT…LDSQRHAYQR (236 aa)). The TRAM domain occupies 378–440 (RAAAGRVFDV…SNSLFGELVS (63 aa)).

This sequence belongs to the methylthiotransferase family. MiaB subfamily. As to quaternary structure, monomer. It depends on [4Fe-4S] cluster as a cofactor.

It localises to the cytoplasm. It catalyses the reaction N(6)-dimethylallyladenosine(37) in tRNA + (sulfur carrier)-SH + AH2 + 2 S-adenosyl-L-methionine = 2-methylsulfanyl-N(6)-dimethylallyladenosine(37) in tRNA + (sulfur carrier)-H + 5'-deoxyadenosine + L-methionine + A + S-adenosyl-L-homocysteine + 2 H(+). Functionally, catalyzes the methylthiolation of N6-(dimethylallyl)adenosine (i(6)A), leading to the formation of 2-methylthio-N6-(dimethylallyl)adenosine (ms(2)i(6)A) at position 37 in tRNAs that read codons beginning with uridine. In Methylobacterium radiotolerans (strain ATCC 27329 / DSM 1819 / JCM 2831 / NBRC 15690 / NCIMB 10815 / 0-1), this protein is tRNA-2-methylthio-N(6)-dimethylallyladenosine synthase.